Here is an 803-residue protein sequence, read N- to C-terminus: Myb-like protein V (803 aa).

2 disordered regions span residues 237 to 333 (SNIY…LPGL) and 429 to 803 (KSTS…SRRK). Residues 258–323 (DANDKNENNN…ENNKNKRTKS (66 aa)) adopt a coiled-coil conformation. Residues 271–294 (DDADDAAADDADDADDDDMDDESD) show a composition bias toward acidic residues. The segment covering 295–315 (SNNNNKNSNNKNSNNKNSNEN) has biased composition (low complexity). One can recognise a Myb-like domain in the interval 332–379 (GLWTDEECRSLIKAVMIIGHRWIKIKEDYYSTSKRKPSQLKDKMRSLR). Coiled coils occupy residues 400-429 (EIEK…SNIK) and 463-496 (NNED…NSAV). A compositionally biased stretch (polar residues) spans 429–438 (KSTSNTSAAS). 2 stretches are compositionally biased toward acidic residues: residues 448 to 480 (NDSD…DEND) and 510 to 533 (EEEE…EENE). 2 stretches are compositionally biased toward basic residues: residues 537-553 (KQKR…KKLK) and 568-577 (HKSKLKSKPQ). The stretch at 573–616 (KSKPQRKVEKEESEKEESEEEESEEEEEEDDEDYESEEDKKKKK) forms a coiled coil. The span at 586 to 609 (EKEESEEEESEEEEEEDDEDYESE) shows a compositional bias: acidic residues. 2 stretches are compositionally biased toward low complexity: residues 625–636 (TSTHTTTTTTTT) and 666–733 (KKSN…PTKK). The span at 786-795 (LNKDSKENKK) shows a compositional bias: basic and acidic residues.

This Dictyostelium discoideum (Social amoeba) protein is Myb-like protein V (mybV).